A 226-amino-acid polypeptide reads, in one-letter code: Ribonuclease T (226 aa).

The Exonuclease domain occupies 20–194; sequence VVIDVETAGF…YDTERTAELF (175 aa). D23, E25, H181, and D186 together coordinate Mg(2+). Catalysis depends on H181, which acts as the Proton donor/acceptor.

It belongs to the RNase T family. As to quaternary structure, homodimer. The cofactor is Mg(2+).

Trims short 3' overhangs of a variety of RNA species, leaving a one or two nucleotide 3' overhang. Responsible for the end-turnover of tRNA: specifically removes the terminal AMP residue from uncharged tRNA (tRNA-C-C-A). Also appears to be involved in tRNA biosynthesis. In Shewanella denitrificans (strain OS217 / ATCC BAA-1090 / DSM 15013), this protein is Ribonuclease T.